Reading from the N-terminus, the 351-residue chain is Tetraacyldisaccharide 4'-kinase (351 aa).

An ATP-binding site is contributed by 47 to 54; sequence KAGGTGKT.

Belongs to the LpxK family.

The enzyme catalyses a lipid A disaccharide + ATP = a lipid IVA + ADP + H(+). It functions in the pathway glycolipid biosynthesis; lipid IV(A) biosynthesis; lipid IV(A) from (3R)-3-hydroxytetradecanoyl-[acyl-carrier-protein] and UDP-N-acetyl-alpha-D-glucosamine: step 6/6. In terms of biological role, transfers the gamma-phosphate of ATP to the 4'-position of a tetraacyldisaccharide 1-phosphate intermediate (termed DS-1-P) to form tetraacyldisaccharide 1,4'-bis-phosphate (lipid IVA). The chain is Tetraacyldisaccharide 4'-kinase from Cytophaga hutchinsonii (strain ATCC 33406 / DSM 1761 / CIP 103989 / NBRC 15051 / NCIMB 9469 / D465).